The primary structure comprises 510 residues: Sulfoquinovosyl transferase SQD2 (510 aa).

The N-terminal 83 residues, 1 to 83, are a transit peptide targeting the chloroplast; it reads MTTLSSINLS…SNDMTITQVR (83 aa). Position 88 is a phosphoserine (S88). A helical membrane pass occupies residues 198–218; that stretch reads PGVMVFGALAIAKMLSVPIVM.

Belongs to the glycosyltransferase group 1 family. Glycosyltransferase 4 subfamily.

The protein resides in the plastid. It is found in the chloroplast membrane. The enzyme catalyses UDP-alpha-D-6-sulfoquinovose + a 1,2-diacyl-sn-glycerol = a 6-sulfo-alpha-D-quinovosyldiacylglycerol + UDP + H(+). It functions in the pathway glycolipid biosynthesis. Catalyzes the transfer of the sulfoquinovose moiety from UDP-sulfoquinovose to diacylglycerol during sulfolipid biosynthesis. Sulfolipid contributes to maintaining a negatively charged lipid-water interface, a requirement for proper function of photosynthetic membranes. Sulfolipid may also function as a substitute of anionic phospholipids under phosphate-limited growth conditions. This Arabidopsis thaliana (Mouse-ear cress) protein is Sulfoquinovosyl transferase SQD2.